A 635-amino-acid polypeptide reads, in one-letter code: Chaperone protein HtpG (635 aa).

An a; substrate-binding region spans residues 1–337 (MELKMHNVQE…SPDLPLNISR (337 aa)). The tract at residues 338–556 (ETLQNNRVVE…EGAMDLRMER (219 aa)) is b. Residues 557-635 (FLREQKQLNY…LNNLLGKISV (79 aa)) are c.

This sequence belongs to the heat shock protein 90 family. Homodimer.

The protein resides in the cytoplasm. Functionally, molecular chaperone. Has ATPase activity. The sequence is that of Chaperone protein HtpG from Wolbachia pipientis wMel.